The chain runs to 106 residues: Terpredoxin (106 aa).

In terms of domain architecture, 2Fe-2S ferredoxin-type spans P2–A106. The [2Fe-2S] cluster site is built by C40, C46, C49, and C87.

It belongs to the adrenodoxin/putidaredoxin family. [2Fe-2S] cluster serves as cofactor.

Functionally, the oxidation of alpha-terpineol by cytochrome p450-TERP requires the participation of a flavoprotein, terpredoxin reductase, and an iron-sulfur protein, terpredoxin, to mediate the transfer of electrons from NADH to P450 for oxygen activation. The chain is Terpredoxin (terPB) from Pseudomonas sp.